The following is a 357-amino-acid chain: D-alanine--D-alanine ligase (357 aa).

Residues 134–339 enclose the ATP-grasp domain; sequence KQLFEHRGLP…YPDLIAKLID (206 aa). 167–222 is a binding site for ATP; sequence NDKLTYPVFVKPANLGSSVGISKCNNEEELKSGITEAFQFDRKLVIEQGINAREIE. The Mg(2+) site is built by D293, E306, and N308.

It belongs to the D-alanine--D-alanine ligase family. The cofactor is Mg(2+). Requires Mn(2+) as cofactor.

Its subcellular location is the cytoplasm. It catalyses the reaction 2 D-alanine + ATP = D-alanyl-D-alanine + ADP + phosphate + H(+). Its pathway is cell wall biogenesis; peptidoglycan biosynthesis. Cell wall formation. The protein is D-alanine--D-alanine ligase of Staphylococcus epidermidis (strain ATCC 12228 / FDA PCI 1200).